Consider the following 121-residue polypeptide: Non-specific lipid-transfer protein 9 (121 aa).

Residues 1–27 form the signal peptide; it reads MRKSISIAFVIAITIFMSHLNVFTVYS. Intrachain disulfides connect C31/C80, C41/C57, C58/C102, and C78/C116.

The protein belongs to the plant LTP family.

Its function is as follows. Plant non-specific lipid-transfer proteins transfer phospholipids as well as galactolipids across membranes. May play a role in wax or cutin deposition in the cell walls of expanding epidermal cells and certain secretory tissues. The polypeptide is Non-specific lipid-transfer protein 9 (LTP9) (Arabidopsis thaliana (Mouse-ear cress)).